Consider the following 272-residue polypeptide: Energy-coupling factor transporter ATP-binding protein EcfA1 (272 aa).

Residues 2-237 (IKVSDVCFSY…KNIIEKAKID (236 aa)) enclose the ABC transporter domain. 37–44 (GHNGSGKS) is a binding site for ATP.

It belongs to the ABC transporter superfamily. Energy-coupling factor EcfA family. In terms of assembly, forms a stable energy-coupling factor (ECF) transporter complex composed of 2 membrane-embedded substrate-binding proteins (S component), 2 ATP-binding proteins (A component) and 2 transmembrane proteins (T component).

It localises to the cell membrane. In terms of biological role, ATP-binding (A) component of a common energy-coupling factor (ECF) ABC-transporter complex. Unlike classic ABC transporters this ECF transporter provides the energy necessary to transport a number of different substrates. The protein is Energy-coupling factor transporter ATP-binding protein EcfA1 of Mesomycoplasma hyopneumoniae (strain J / ATCC 25934 / NCTC 10110) (Mycoplasma hyopneumoniae).